The chain runs to 381 residues: 40-kDa huntingtin-associated protein (381 aa).

An N-acetylalanine modification is found at A2. The Nuclear localization signal signature appears at K34 to R36. Residues Q221–S265 are disordered. The segment covering P226–R242 has biased composition (pro residues).

Interacts with HTT (via C-terminus). Interacts with RAB5A. Found in a complex with F8A1/F8A2/F8A3, HTT and RAB5A; mediates the recruitment of HTT by RAB5A onto early endosomes. As to expression, produced abundantly in a wide variety of cell types.

The protein localises to the cytoplasm. It localises to the nucleus. It is found in the early endosome. Its subcellular location is the nuclear body. Its function is as follows. RAB5A effector molecule that is involved in vesicular trafficking of early endosomes. Mediates the recruitment of HTT by RAB5A onto early endosomes. The HTT-F8A1/F8A2/F8A3-RAB5A complex stimulates early endosomal interaction with actin filaments and inhibits interaction with microtubules, leading to the reduction of endosome motility. In Mus musculus (Mouse), this protein is 40-kDa huntingtin-associated protein (F8a1).